A 323-amino-acid polypeptide reads, in one-letter code: Beta-ketoacyl-[acyl-carrier-protein] synthase III (323 aa).

Residues Cys113 and His250 contribute to the active site. Residues 251 to 255 (QANKR) form an ACP-binding region. Asn280 is an active-site residue.

This sequence belongs to the thiolase-like superfamily. FabH family. In terms of assembly, homodimer.

It localises to the cytoplasm. It catalyses the reaction malonyl-[ACP] + acetyl-CoA + H(+) = 3-oxobutanoyl-[ACP] + CO2 + CoA. Its pathway is lipid metabolism; fatty acid biosynthesis. Its function is as follows. Catalyzes the condensation reaction of fatty acid synthesis by the addition to an acyl acceptor of two carbons from malonyl-ACP. Catalyzes the first condensation reaction which initiates fatty acid synthesis and may therefore play a role in governing the total rate of fatty acid production. Possesses both acetoacetyl-ACP synthase and acetyl transacylase activities. Its substrate specificity determines the biosynthesis of branched-chain and/or straight-chain of fatty acids. This is Beta-ketoacyl-[acyl-carrier-protein] synthase III from Brucella abortus biovar 1 (strain 9-941).